Here is a 749-residue protein sequence, read N- to C-terminus: Adenosylcobalamin-dependent ribonucleoside-triphosphate reductase (749 aa).

Cys124 and Cys427 are joined by a disulfide. The interval 152 to 163 (SMPFSFMFDQLM) is effector region-1. The segment at 173–321 (TPNNVHQMPV…MGNMIGKTVV (149 aa)) is effector region-2. Residues Cys416 and Glu418 contribute to the active site. An adenosylcobalamin-binding-1 region spans residues 573–634 (FHYARYLIQR…EPAFASAGEV (62 aa)). The segment at 693 to 734 (FKQAPKEPIDAATYDAKCQEITADVAEKFAAMTGNHDQKDIE) is adenosylcobalamin-binding-2.

The protein belongs to the class II ribonucleoside-triphosphate reductase family. In terms of assembly, monomer. It depends on adenosylcob(III)alamin as a cofactor.

It carries out the reaction a 2'-deoxyribonucleoside 5'-triphosphate + [thioredoxin]-disulfide + H2O = a ribonucleoside 5'-triphosphate + [thioredoxin]-dithiol. Its activity is regulated as follows. Allosterically regulated by ATP and dNTP. The protein is Adenosylcobalamin-dependent ribonucleoside-triphosphate reductase (rtpR) of Levilactobacillus brevis (strain ATCC 367 / BCRC 12310 / CIP 105137 / JCM 1170 / LMG 11437 / NCIMB 947 / NCTC 947) (Lactobacillus brevis).